Reading from the N-terminus, the 147-residue chain is Fluoride-specific ion channel FluC 1 (147 aa).

The next 4 membrane-spanning stretches (helical) occupy residues 29–49 (YVYI…ISFL), 61–81 (IANL…IAFF), 90–110 (AITT…LELI), and 118–138 (FITL…LCYV). Na(+)-binding residues include glycine 97 and threonine 100.

It belongs to the fluoride channel Fluc/FEX (TC 1.A.43) family.

It localises to the cell membrane. It catalyses the reaction fluoride(in) = fluoride(out). With respect to regulation, na(+) is not transported, but it plays an essential structural role and its presence is essential for fluoride channel function. In terms of biological role, fluoride-specific ion channel. Important for reducing fluoride concentration in the cell, thus reducing its toxicity. This Staphylococcus aureus (strain MRSA252) protein is Fluoride-specific ion channel FluC 1.